The primary structure comprises 620 residues: Chaperone protein HscA homolog (620 aa).

It belongs to the heat shock protein 70 family.

Its function is as follows. Chaperone involved in the maturation of iron-sulfur cluster-containing proteins. Has a low intrinsic ATPase activity which is markedly stimulated by HscB. This Shewanella piezotolerans (strain WP3 / JCM 13877) protein is Chaperone protein HscA homolog.